The following is a 461-amino-acid chain: Ornithine decarboxylase (461 aa).

Lys69 carries the N6-(pyridoxal phosphate)lysine modification. Pyridoxal 5'-phosphate contacts are provided by residues Ser200, Gly237, and 274-277 (EPGR). Ser303 carries the post-translational modification Phosphoserine; by CK2. Residue 331–332 (YD) coordinates substrate. Cys360 functions as the Proton donor; shared with dimeric partner in the catalytic mechanism. Residue Cys360 is modified to S-nitrosocysteine. Asp361 is a substrate binding site. Pyridoxal 5'-phosphate is bound at residue Tyr389.

The protein belongs to the Orn/Lys/Arg decarboxylase class-II family. In terms of assembly, homodimer. Only the dimer is catalytically active, as the active sites are constructed of residues from both monomers. It depends on pyridoxal 5'-phosphate as a cofactor.

The enzyme catalyses L-ornithine + H(+) = putrescine + CO2. Its pathway is amine and polyamine biosynthesis; putrescine biosynthesis via L-ornithine pathway; putrescine from L-ornithine: step 1/1. Inhibited by antizymes (AZs) OAZ1, OAZ2 and OAZ3 in response to polyamine levels. AZs inhibit the assembly of the functional homodimer by binding to ODC monomers. Additionally, OAZ1 targets ODC monomers for ubiquitin-independent proteolytic destruction by the 26S proteasome. Its function is as follows. Catalyzes the first and rate-limiting step of polyamine biosynthesis that converts ornithine into putrescine, which is the precursor for the polyamines, spermidine and spermine. Polyamines are essential for cell proliferation and are implicated in cellular processes, ranging from DNA replication to apoptosis. The protein is Ornithine decarboxylase (ODC1) of Bos taurus (Bovine).